The following is a 579-amino-acid chain: Arginine--tRNA ligase (579 aa).

Positions 136–146 (ANPTGPLHIGH) match the 'HIGH' region motif.

This sequence belongs to the class-I aminoacyl-tRNA synthetase family. Monomer.

The protein localises to the cytoplasm. It carries out the reaction tRNA(Arg) + L-arginine + ATP = L-arginyl-tRNA(Arg) + AMP + diphosphate. The sequence is that of Arginine--tRNA ligase from Anaplasma marginale (strain St. Maries).